The following is a 91-amino-acid chain: Small ribosomal subunit protein bS16 (91 aa).

It belongs to the bacterial ribosomal protein bS16 family.

The chain is Small ribosomal subunit protein bS16 from Staphylococcus aureus (strain Mu3 / ATCC 700698).